Reading from the N-terminus, the 290-residue chain is 4-diphosphocytidyl-2-C-methyl-D-erythritol kinase (290 aa).

Residue lysine 10 is part of the active site. Residue 96 to 106 coordinates ATP; that stretch reads PIAAGLGGGSS. Aspartate 138 is a catalytic residue.

This sequence belongs to the GHMP kinase family. IspE subfamily.

It carries out the reaction 4-CDP-2-C-methyl-D-erythritol + ATP = 4-CDP-2-C-methyl-D-erythritol 2-phosphate + ADP + H(+). It participates in isoprenoid biosynthesis; isopentenyl diphosphate biosynthesis via DXP pathway; isopentenyl diphosphate from 1-deoxy-D-xylulose 5-phosphate: step 3/6. Its function is as follows. Catalyzes the phosphorylation of the position 2 hydroxy group of 4-diphosphocytidyl-2C-methyl-D-erythritol. The chain is 4-diphosphocytidyl-2-C-methyl-D-erythritol kinase from Caulobacter vibrioides (strain NA1000 / CB15N) (Caulobacter crescentus).